Reading from the N-terminus, the 437-residue chain is Sperm-associated antigen 4 protein (437 aa).

Positions 1 to 12 (MRRSSRPGSASS) are enriched in low complexity. Residues 1–88 (MRRSSRPGSA…KPAPRSHNWQ (88 aa)) form a disordered region. Polar residues-rich tracts occupy residues 19 to 31 (NFFSENSSMSITS) and 72 to 88 (WAGSSQQKPAPRSHNWQ). The next 2 helical transmembrane spans lie at 135–155 (FLSLLFQGLSVLLSLAGDVLV) and 166–186 (FLFTAVSLLSLFLSAFWLGLL). The stretch at 197–244 (KEMLTLSEYHERVRSQGQQLQQLQAELDKLHKEVSTVRAANSERVAKL) forms a coiled coil. The 161-residue stretch at 265–425 (GASIDLQKTS…YRVRAHGVRT (161 aa)) folds into the SUN domain.

In terms of assembly, homodimer. Interacts with ODF1. May associate with microtubules. Interacts with SUN3 and SYNE1; suggesting the formation of a spermatogenesis-specific LINC complex; a SUN domain-based heterotrimer with SUN3 may associate with SYNE1. Interacts with SEPT12 and LMNB1; during spermatogenesis. In terms of tissue distribution, predominantly epressed in testis. Expressed in ejaculated spermatozoa (at protein level).

It localises to the membrane. It is found in the cytoplasm. Its subcellular location is the cytoskeleton. The protein resides in the flagellum axoneme. The protein localises to the nucleus envelope. It localises to the nucleus inner membrane. Its function is as follows. Involved in spermatogenesis. Required for sperm head formation but not required to establish and maintain general polarity of the sperm head. Required for anchoring and organization of the manchette. Required for targeting of SUN3 and probably SYNE1 through a probable SUN1:SYNE3 LINC complex to the nuclear envelope and involved in accurate posterior sperm head localization of the complex. May anchor SUN3 the nuclear envelope. Involved in maintenance of the nuclear envelope integrity. May assist the organization and assembly of outer dense fibers (ODFs), a specific structure of the sperm tail. This is Sperm-associated antigen 4 protein (SPAG4) from Homo sapiens (Human).